A 197-amino-acid chain; its full sequence is Putative RNA polymerase II subunit B1 CTD phosphatase rtr1 (197 aa).

Residues 60-139 (EARKYLRKSD…LSDEPLWIRE (80 aa)) form an RTR1-type zinc finger. Residues cysteine 83, cysteine 88, cysteine 115, and cysteine 119 each contribute to the Zn(2+) site.

The protein belongs to the RPAP2 family.

The protein resides in the cytoplasm. The protein localises to the nucleus. It catalyses the reaction O-phospho-L-seryl-[protein] + H2O = L-seryl-[protein] + phosphate. The enzyme catalyses O-phospho-L-threonyl-[protein] + H2O = L-threonyl-[protein] + phosphate. Functionally, putative RNA polymerase II subunit B1 C-terminal domain (CTD) phosphatase involved in RNA polymerase II transcription regulation. This is Putative RNA polymerase II subunit B1 CTD phosphatase rtr1 from Schizosaccharomyces pombe (strain 972 / ATCC 24843) (Fission yeast).